The sequence spans 394 residues: MAKEKFERSKPHVNVGTIGHVDHGKTTLTAAISHVLTKTYGGEAKDFAQIDNAPEERERGITINTSHIEYDTPTRHYAHVDCPGHADYVKNMITGAAQMDGAILVVASTDGPMPQTREHILLSRQVGVPFIIVFMNKCDMVDDEELLELVEMEVRELLSEYDFPGDDLPVIQGSALKALEGEPEWEAKILELAEALDSYIPEPERAIDGAFILPIEDVFSISGRGTVVTGRVERGIVKVGDEVEIVGIKETTKTTCTGVEMFRKLLDEGRAGENCGVLLRGTKRDEVERGQVLAQPGSITPHTQFESEVYVLSKEEGGRHTPFFKGYRPQFYFRTTDVTGTIELPEGVEMVMPGDNIKMVVTLICPIAMDEGLRFAIREGGRTVGAGVVAKIIA.

The 195-residue stretch at K10–E204 folds into the tr-type G domain. Positions G19–T26 are G1. G19–T26 is a binding site for GTP. T26 provides a ligand contact to Mg(2+). The G2 stretch occupies residues G60–N64. Positions D81–G84 are G3. GTP contacts are provided by residues D81–H85 and N136–D139. The interval N136–D139 is G4. The tract at residues S174 to L176 is G5.

Belongs to the TRAFAC class translation factor GTPase superfamily. Classic translation factor GTPase family. EF-Tu/EF-1A subfamily. As to quaternary structure, monomer.

Its subcellular location is the cytoplasm. The enzyme catalyses GTP + H2O = GDP + phosphate + H(+). Its function is as follows. GTP hydrolase that promotes the GTP-dependent binding of aminoacyl-tRNA to the A-site of ribosomes during protein biosynthesis. The chain is Elongation factor Tu 2 from Shewanella loihica (strain ATCC BAA-1088 / PV-4).